Here is a 1250-residue protein sequence, read N- to C-terminus: Phospholipid-transporting ATPase IC (1250 aa).

Acidic residues-rich tracts occupy residues 1 to 13 and 24 to 40; these read MDTD…EDDS and SDDE…TDEP. A disordered region spans residues 1 to 52; that stretch reads MDTDYESTYEDDSQVPNDDVVPYSDDETDDELDSPQTDEPEQNRRNVQAEQS. Topologically, residues 1 to 133 are cytoplasmic; that stretch reads MDTDYESTYE…VLLILQTIPQ (133 aa). Residues 134-154 form a helical membrane-spanning segment; the sequence is ISTVTWSTTLIPLLLVLGITA. The Exoplasmic loop portion of the chain corresponds to 155-338; that stretch reads IKDLVDDIAR…TKIDYLMNYM (184 aa). The chain crosses the membrane as a helical span at residues 339 to 359; sequence VYTIFVLLILAAAGLAIGQTF. Over 360–385 the chain is Cytoplasmic; the sequence is WEAKLGAANVSWYLYDGNNYSPSYRG. A helical membrane pass occupies residues 386–406; it reads FLAFWGYIIVLNTMVPISLYV. Over 407–956 the chain is Exoplasmic loop; it reads SVEVIRLGQS…KFLRYFFYKN (550 aa). Aspartate 454 functions as the 4-aspartylphosphate intermediate in the catalytic mechanism. ATP contacts are provided by aspartate 454, lysine 455, threonine 456, glutamate 553, phenylalanine 594, lysine 617, arginine 650, threonine 730, glycine 731, aspartate 732, arginine 865, and lysine 871. Position 454 (aspartate 454) interacts with Mg(2+). Mg(2+) is bound at residue threonine 456. Aspartate 891 provides a ligand contact to Mg(2+). Residues asparagine 894 and aspartate 895 each contribute to the ATP site. Mg(2+) is bound at residue aspartate 895. Residues 957–977 form a helical membrane-spanning segment; sequence FSFTLVHFWYSFFNGFSAQTV. Topologically, residues 978–980 are cytoplasmic; that stretch reads YED. A helical transmembrane segment spans residues 981–1001; sequence WFITLYNVLYSSLPVLLVGLL. Topologically, residues 1002–1034 are exoplasmic loop; that stretch reads DQDVSDKLSLAFPRLYVPGQKDLLFNYKKFFLS. A helical transmembrane segment spans residues 1035 to 1055; that stretch reads LFHGIVTSLIIFFIPYGAFLL. The Cytoplasmic portion of the chain corresponds to 1056–1069; it reads TMGQDGEAPSDYQS. The helical transmembrane segment at 1070 to 1090 threads the bilayer; sequence FAVTTATALVITVNFQIGLDT. At 1091-1092 the chain is on the exoplasmic loop side; it reads SY. The chain crosses the membrane as a helical span at residues 1093–1113; sequence WTFVNAFSIFGSIAIYFGIMF. Topologically, residues 1114–1117 are cytoplasmic; the sequence is DLHS. The helical transmembrane segment at 1118–1138 threads the bilayer; the sequence is AGIHVLFPSMFIFTGAAPNAL. At 1139–1140 the chain is on the exoplasmic loop side; it reads RQ. Residues 1141 to 1161 traverse the membrane as a helical segment; it reads PYLWLTIILTVAFCLLPIVAL. Topologically, residues 1162-1250 are cytoplasmic; the sequence is RFLAKTIWPS…AQITHFTPQT (89 aa).

It belongs to the cation transport ATPase (P-type) (TC 3.A.3) family. Type IV subfamily. Component of a P4-ATPase flippase complex which consists of a catalytic alpha subunit and an accessory beta subunit. The flippase ATP8B1:TMEM30A complex can form an intermediate phosphoenzyme in vitro. Also interacts with beta subunit TMEM30B. It depends on Mg(2+) as a cofactor.

It is found in the cell membrane. The protein localises to the apical cell membrane. Its subcellular location is the cell projection. It localises to the stereocilium. The protein resides in the endoplasmic reticulum. It is found in the golgi apparatus. The enzyme catalyses ATP + H2O + phospholipidSide 1 = ADP + phosphate + phospholipidSide 2.. It carries out the reaction a 1,2-diacyl-sn-glycero-3-phospho-L-serine(out) + ATP + H2O = a 1,2-diacyl-sn-glycero-3-phospho-L-serine(in) + ADP + phosphate + H(+). Its function is as follows. Catalytic component of a P4-ATPase flippase complex which catalyzes the hydrolysis of ATP coupled to the transport of aminophospholipids from the outer to the inner leaflet of various membranes and ensures the maintenance of asymmetric distribution of phospholipids. Phospholipid translocation also seems to be implicated in vesicle formation and in uptake of lipid signaling molecules. May also participate in the establishment of the canalicular membrane integrity by ensuring asymmetric distribution of phospholipids in the canicular membrane. This chain is Phospholipid-transporting ATPase IC (atp8b1), found in Xenopus tropicalis (Western clawed frog).